The primary structure comprises 748 residues: Phytochrome-like protein Cph1 (748 aa).

One can recognise a PAS domain in the interval alanine 19–isoleucine 86. The chromophore binding domain stretch occupies residues serine 87–arginine 510. Residues asparagine 152–glutamate 320 enclose the GAF domain. Cysteine 259 provides a ligand contact to a tetrapyrrole. Positions isoleucine 535–asparagine 748 constitute a Histidine kinase domain. Histidine 538 is modified (phosphohistidine; by autocatalysis).

It in the N-terminal section; belongs to the phytochrome family. In terms of assembly, homodimer. Contains one covalently linked tetrapyrrole chromophore.

It carries out the reaction ATP + protein L-histidine = ADP + protein N-phospho-L-histidine.. In terms of biological role, regulatory photoreceptor which exists in two forms that are reversibly interconvertible by light: the R form that absorbs maximally in the red region of the spectrum and the FR form that absorbs maximally in the far-red region. Also has a slight blue shift for the far-red maximum. Forms a two-component system with the Rrcp1 response regulator. In Synechocystis sp. (strain ATCC 27184 / PCC 6803 / Kazusa), this protein is Phytochrome-like protein Cph1 (cph1).